A 463-amino-acid chain; its full sequence is Flotillin-like protein 2 (463 aa).

C35 is lipidated: S-palmitoyl cysteine. The stretch at E305–E354 forms a coiled coil.

This sequence belongs to the band 7/mec-2 family. Flotillin subfamily. May be palmitoylated.

The protein resides in the cell membrane. Its subcellular location is the membrane. It localises to the caveola. Its function is as follows. May act as a scaffolding protein within caveolar membranes, functionally participating in formation of caveolae or caveolae-like vesicles. In Arabidopsis thaliana (Mouse-ear cress), this protein is Flotillin-like protein 2 (FLOT2).